We begin with the raw amino-acid sequence, 378 residues long: Copper-containing nitrite reductase (378 aa).

Residues 1-38 (MTEQLQMTRRTMLAGAALAGAVAPLLHTAQAHAAGAAA) constitute a signal peptide (tat-type signal). 2 consecutive Plastocyanin-like domains span residues 39 to 213 (AAGA…YDKI) and 214 to 378 (YYVG…PASM). The Cu cation site is built by histidine 133, histidine 138, histidine 173, cysteine 174, histidine 183, methionine 188, and histidine 344.

The protein belongs to the multicopper oxidase family. As to quaternary structure, homotrimer. It depends on Cu(+) as a cofactor. The cofactor is Cu(2+). FAD is required as a cofactor. In terms of processing, predicted to be exported by the Tat system. The position of the signal peptide cleavage has been experimentally proven.

Its subcellular location is the periplasm. The catalysed reaction is nitric oxide + Fe(III)-[cytochrome c] + H2O = Fe(II)-[cytochrome c] + nitrite + 2 H(+). Its pathway is nitrogen metabolism; nitrate reduction (denitrification); dinitrogen from nitrate: step 2/4. The protein is Copper-containing nitrite reductase (nirK) of Achromobacter cycloclastes.